A 213-amino-acid chain; its full sequence is UPF0301 protein RPC_0788 (213 aa).

The tract at residues 1 to 20 is disordered; sequence MDPKSKAPKRDETKGADDAS.

The protein belongs to the UPF0301 (AlgH) family.

The protein is UPF0301 protein RPC_0788 of Rhodopseudomonas palustris (strain BisB18).